The chain runs to 468 residues: UDP-N-acetylmuramoylalanine--D-glutamate ligase (468 aa).

117 to 123 (GTDGKTT) contributes to the ATP binding site.

This sequence belongs to the MurCDEF family.

Its subcellular location is the cytoplasm. The catalysed reaction is UDP-N-acetyl-alpha-D-muramoyl-L-alanine + D-glutamate + ATP = UDP-N-acetyl-alpha-D-muramoyl-L-alanyl-D-glutamate + ADP + phosphate + H(+). The protein operates within cell wall biogenesis; peptidoglycan biosynthesis. In terms of biological role, cell wall formation. Catalyzes the addition of glutamate to the nucleotide precursor UDP-N-acetylmuramoyl-L-alanine (UMA). The chain is UDP-N-acetylmuramoylalanine--D-glutamate ligase from Chloroherpeton thalassium (strain ATCC 35110 / GB-78).